The following is a 231-amino-acid chain: Ribose-5-phosphate isomerase A (231 aa).

Residues 32-35 (TGST), 85-88 (DGAD), and 98-101 (KGGG) each bind substrate. Glu-107 (proton acceptor) is an active-site residue. Lys-125 serves as a coordination point for substrate.

This sequence belongs to the ribose 5-phosphate isomerase family. Homodimer.

The enzyme catalyses aldehydo-D-ribose 5-phosphate = D-ribulose 5-phosphate. Its pathway is carbohydrate degradation; pentose phosphate pathway; D-ribose 5-phosphate from D-ribulose 5-phosphate (non-oxidative stage): step 1/1. Functionally, catalyzes the reversible conversion of ribose-5-phosphate to ribulose 5-phosphate. In Burkholderia cenocepacia (strain ATCC BAA-245 / DSM 16553 / LMG 16656 / NCTC 13227 / J2315 / CF5610) (Burkholderia cepacia (strain J2315)), this protein is Ribose-5-phosphate isomerase A.